A 356-amino-acid chain; its full sequence is Tyrosine recombinase XerS (356 aa).

Residues 16–121 (IMPWYVLDYY…ALSSLYKYLT (106 aa)) enclose the Core-binding (CB) domain. Residues 169–354 (AFLDYVDKEY…VNDEQKNALD (186 aa)) enclose the Tyr recombinase domain. Residues Arg-210, Lys-234, His-306, Arg-309, and His-332 contribute to the active site. The active-site O-(3'-phospho-DNA)-tyrosine intermediate is Tyr-341.

It belongs to the 'phage' integrase family. XerS subfamily.

The protein localises to the cytoplasm. FtsK is required for recombination. In terms of biological role, site-specific tyrosine recombinase, which acts by catalyzing the cutting and rejoining of the recombining DNA molecules. Essential to convert dimers of the bacterial chromosome into monomers to permit their segregation at cell division. This is Tyrosine recombinase XerS from Streptococcus equi subsp. zooepidemicus (strain H70).